Consider the following 254-residue polypeptide: Small ribosomal subunit protein uS2 (254 aa).

The disordered stretch occupies residues 225-254; sequence ALSERKREKDDAKLKEDEESKKASDKAEIQ. The span at 226 to 254 shows a compositional bias: basic and acidic residues; the sequence is LSERKREKDDAKLKEDEESKKASDKAEIQ.

The protein belongs to the universal ribosomal protein uS2 family.

The sequence is that of Small ribosomal subunit protein uS2 from Cytophaga hutchinsonii (strain ATCC 33406 / DSM 1761 / CIP 103989 / NBRC 15051 / NCIMB 9469 / D465).